A 46-amino-acid chain; its full sequence is Protein PsbN (46 aa).

Residues 7 to 27 (ALSVAIGVLAVLLGMTGFGVY) traverse the membrane as a helical segment.

The protein belongs to the PsbN family.

Its subcellular location is the cellular thylakoid membrane. Functionally, may play a role in photosystem I and II biogenesis. This Parasynechococcus marenigrum (strain WH8102) protein is Protein PsbN.